Consider the following 280-residue polypeptide: Large ribosomal subunit protein uL2 (280 aa).

Disordered stretches follow at residues 1–47 (MAIR…NVHG) and 224–280 (VVMN…SKKR). Residues 23–33 (EITRSTPEKSL) show a composition bias toward basic and acidic residues. Positions 37 to 47 (LPKKGGRNVHG) are enriched in basic residues. Over residues 258-268 (RNPNRYSNNMI) the composition is skewed to polar residues. Residues 270–280 (QRRRTNKSKKR) are compositionally biased toward basic residues.

Belongs to the universal ribosomal protein uL2 family. Part of the 50S ribosomal subunit. Forms a bridge to the 30S subunit in the 70S ribosome.

Its function is as follows. One of the primary rRNA binding proteins. Required for association of the 30S and 50S subunits to form the 70S ribosome, for tRNA binding and peptide bond formation. It has been suggested to have peptidyltransferase activity; this is somewhat controversial. Makes several contacts with the 16S rRNA in the 70S ribosome. This chain is Large ribosomal subunit protein uL2, found in Corynebacterium diphtheriae (strain ATCC 700971 / NCTC 13129 / Biotype gravis).